The chain runs to 272 residues: Putative pyruvate, phosphate dikinase regulatory protein (272 aa).

Residue 153 to 160 participates in ADP binding; that stretch reads GVSRTSKT.

Belongs to the pyruvate, phosphate/water dikinase regulatory protein family. PDRP subfamily.

It catalyses the reaction N(tele)-phospho-L-histidyl/L-threonyl-[pyruvate, phosphate dikinase] + ADP = N(tele)-phospho-L-histidyl/O-phospho-L-threonyl-[pyruvate, phosphate dikinase] + AMP + H(+). It carries out the reaction N(tele)-phospho-L-histidyl/O-phospho-L-threonyl-[pyruvate, phosphate dikinase] + phosphate + H(+) = N(tele)-phospho-L-histidyl/L-threonyl-[pyruvate, phosphate dikinase] + diphosphate. Functionally, bifunctional serine/threonine kinase and phosphorylase involved in the regulation of the pyruvate, phosphate dikinase (PPDK) by catalyzing its phosphorylation/dephosphorylation. The protein is Putative pyruvate, phosphate dikinase regulatory protein of Streptococcus sanguinis (strain SK36).